The primary structure comprises 120 residues: UPF0102 protein Pfl01_4685 (120 aa).

It belongs to the UPF0102 family.

The protein is UPF0102 protein Pfl01_4685 of Pseudomonas fluorescens (strain Pf0-1).